Here is a 100-residue protein sequence, read N- to C-terminus: UPF0213 protein YhbQ (100 aa).

Positions 2 to 77 (TPWFLYLIRT…KQLTKRQKER (76 aa)) constitute a GIY-YIG domain.

Belongs to the UPF0213 family.

The sequence is that of UPF0213 protein YhbQ from Escherichia coli O127:H6 (strain E2348/69 / EPEC).